The sequence spans 750 residues: K(+)-insensitive pyrophosphate-energized proton pump (750 aa).

Helical transmembrane passes span 1–21 (MYGL…YQGI), 51–71 (FIII…GGLN), 78–98 (VVFI…VAWF), 133–153 (IGML…LFIP), and 161–181 (FIGF…AGGI). Residue K184 coordinates substrate. Positions 187, 191, and 216 each coordinate Mg(2+). 6 helical membrane passes run 227–247 (DGFE…LLAI), 257–277 (LVWI…SYWV), 301–321 (LVWL…YMLI), 327–347 (GTMW…GALI), 391–411 (WMGL…TLGL), and 420–440 (VFAF…TIAV). Residue D448 participates in Mg(2+) binding. 4 helical membrane passes run 503 to 523 (VLIG…IMIL), 538 to 558 (ILWP…YWFT), 607 to 627 (GMIN…CLES), and 629 to 649 (LFIG…IFMA). D656, D681, and D685 together coordinate Ca(2+). K688 provides a ligand contact to substrate. A run of 2 helical transmembrane segments spans residues 694–714 (ALNP…ELAI) and 716–736 (LPTT…LVFV).

It belongs to the H(+)-translocating pyrophosphatase (TC 3.A.10) family. K(+)-insensitive subfamily. As to quaternary structure, homodimer. The cofactor is Mg(2+).

Its subcellular location is the cell inner membrane. It carries out the reaction diphosphate + H2O + H(+)(in) = 2 phosphate + 2 H(+)(out). Its function is as follows. Proton pump that utilizes the energy of pyrophosphate hydrolysis as the driving force for proton movement across the membrane. Generates a proton motive force. This Chlorobaculum tepidum (strain ATCC 49652 / DSM 12025 / NBRC 103806 / TLS) (Chlorobium tepidum) protein is K(+)-insensitive pyrophosphate-energized proton pump.